Consider the following 384-residue polypeptide: Polar flagellin C (384 aa).

The stretch at 317–347 forms a coiled coil; sequence AKQNRLSHSINNLANIQENVDASNSRIKDTD.

It belongs to the bacterial flagellin family. In terms of assembly, heteromer of multiple flagellin subunits including FlaA, FlaB/D, FlaC, FlaE and FlaF. Homomer of FlaC is not able to form a functional filament.

It is found in the secreted. Its subcellular location is the bacterial flagellum. Flagellin is the subunit protein which polymerizes to form the filaments of bacterial flagella. FlaC is not essential for polar flagellar synthesis and swimming motility. Homomer of FlaC is not able to form a functional filament. The protein is Polar flagellin C (flaC) of Vibrio parahaemolyticus serotype O3:K6 (strain RIMD 2210633).